We begin with the raw amino-acid sequence, 436 residues long: EPS I polysaccharide export inner membrane protein EpsE (436 aa).

The next 12 helical transmembrane spans lie at Val-20–Leu-40, Phe-49–Gly-69, Leu-91–Leu-111, Ala-133–Met-153, Ala-160–Ile-180, Leu-185–Leu-205, Val-234–Met-254, Leu-261–Leu-281, Ala-307–Gly-327, Ala-341–Leu-361, Phe-375–Leu-395, and Gly-396–Phe-416.

The protein to E.coli bicyclomycin resistance protein (BCR).

The protein localises to the cell inner membrane. In terms of biological role, probably involved in polymerization and/or export of exopolysaccharide EPS I which functions as a virulence factor. May play a role in export of EPS I or its intermediates across the membranes. This Ralstonia solanacearum (Pseudomonas solanacearum) protein is EPS I polysaccharide export inner membrane protein EpsE (epsE).